Reading from the N-terminus, the 259-residue chain is UPF0246 protein PSPPH_1119 (259 aa).

This sequence belongs to the UPF0246 family.

This is UPF0246 protein PSPPH_1119 from Pseudomonas savastanoi pv. phaseolicola (strain 1448A / Race 6) (Pseudomonas syringae pv. phaseolicola (strain 1448A / Race 6)).